The primary structure comprises 554 residues: Formate--tetrahydrofolate ligase (554 aa).

67-74 (TPTGEGKT) lines the ATP pocket.

The protein belongs to the formate--tetrahydrofolate ligase family.

It catalyses the reaction (6S)-5,6,7,8-tetrahydrofolate + formate + ATP = (6R)-10-formyltetrahydrofolate + ADP + phosphate. It functions in the pathway one-carbon metabolism; tetrahydrofolate interconversion. This Finegoldia magna (strain ATCC 29328 / DSM 20472 / WAL 2508) (Peptostreptococcus magnus) protein is Formate--tetrahydrofolate ligase.